We begin with the raw amino-acid sequence, 105 residues long: uncharacterized protein (105 aa).

It belongs to the baculoviridae 11 kDa protein family.

This is an uncharacterized protein from Autographa californica nuclear polyhedrosis virus (AcMNPV).